A 61-amino-acid chain; its full sequence is Large ribosomal subunit protein bL32 (61 aa).

Residues 1–16 show a composition bias toward basic residues; that stretch reads MAVPKKKTSKSRKNMR. The disordered stretch occupies residues 1 to 20; the sequence is MAVPKKKTSKSRKNMRRAHD.

Belongs to the bacterial ribosomal protein bL32 family.

This is Large ribosomal subunit protein bL32 from Trichlorobacter lovleyi (strain ATCC BAA-1151 / DSM 17278 / SZ) (Geobacter lovleyi).